The chain runs to 375 residues: MKGPEKAYLVSDKATKMYSLTMDSSEKNNCGKPPLQDDENPHIKYHCHNNNTKAYDARQREQTSAKKKLCIASLICFVFISAEIVGGYIAGSLAVVTDAAHLLVDLSSFFISLGSLWLSSKSSTMRLTFGWYRAEILGALMSIITIWLVTGVLVYLAIERIIRPDYTIDGTVMLITSACALGANVVLALILHQSGHGHSHAGGKHEHMASEYKPQTNASIRAAFIHVIGDLFQSISVLISALIIYFKPEYKIADPICTFIFSIFVLITTVTVLRDLLNILMEGTPRGIHYSDVKQSILAVDGVKSVHSLHLWALTMNQVILSAHIATDILGESKRILKDVTQNVCSSFPFHSVTIQVEPVEEQSPECMFCYEPTQ.

At 1-68 the chain is on the cytoplasmic side; sequence MKGPEKAYLV…QREQTSAKKK (68 aa). Residues His46, Cys47, and His48 each coordinate Zn(2+). Positions 46–48 match the HCH Motif; seals regulatory zinc-binding pocket motif; the sequence is HCH. The chain crosses the membrane as a helical span at residues 69–89; it reads LCIASLICFVFISAEIVGGYI. Topologically, residues 90–98 are lumenal, vesicle; sequence AGSLAVVTD. The chain crosses the membrane as a helical span at residues 99-119; the sequence is AAHLLVDLSSFFISLGSLWLS. His101 and Asp105 together coordinate Zn(2+). Residues 120–135 are Cytoplasmic-facing; it reads SKSSTMRLTFGWYRAE. The helical transmembrane segment at 136-156 threads the bilayer; that stretch reads ILGALMSIITIWLVTGVLVYL. At 157 to 170 the chain is on the lumenal, vesicle side; sequence AIERIIRPDYTIDG. A helical transmembrane segment spans residues 171 to 191; that stretch reads TVMLITSACALGANVVLALIL. At 192–223 the chain is on the cytoplasmic side; sequence HQSGHGHSHAGGKHEHMASEYKPQTNASIRAA. Residues 224–244 form a helical membrane-spanning segment; it reads FIHVIGDLFQSISVLISALII. Zn(2+)-binding residues include His226 and Asp230. Topologically, residues 245–251 are lumenal, vesicle; sequence YFKPEYK. The helical transmembrane segment at 252–272 threads the bilayer; the sequence is IADPICTFIFSIFVLITTVTV. Residues 273–375 are Cytoplasmic-facing; it reads LRDLLNILME…ECMFCYEPTQ (103 aa). Zn(2+) contacts are provided by His307, His324, His351, Glu358, Cys367, and Cys370.

This sequence belongs to the cation diffusion facilitator (CDF) transporter (TC 2.A.4) family. SLC30A subfamily. As to quaternary structure, homodimer.

The protein resides in the cytoplasmic vesicle. It localises to the secretory vesicle membrane. The protein localises to the cell membrane. The catalysed reaction is Zn(2+)(in) + 2 H(+)(out) = Zn(2+)(out) + 2 H(+)(in). In terms of biological role, proton-coupled zinc ion antiporter mediating the entry of zinc into the lumen of pancreatic beta cell secretory granules, thereby regulating insulin secretion. In Xenopus laevis (African clawed frog), this protein is Proton-coupled zinc antiporter SLC30A8 (slc30a8).